The following is a 310-amino-acid chain: Ninja-family protein 3 (310 aa).

Disordered regions lie at residues 1–29, 68–140, and 156–215; these read MASRDFLGRFGGEKGASSDKAGGGAGEPD, SLPG…DDAQ, and DQGN…EQPP. Residues 99–108 show a composition bias toward basic and acidic residues; it reads ERWRRREMQS. Composition is skewed to polar residues over residues 156-166 and 176-193; these read DQGNASSSMPE and KSTSSMEISSDNNNQNKS.

Belongs to the Ninja family.

The protein localises to the nucleus. This is Ninja-family protein 3 (AFP-D1) from Triticum aestivum (Wheat).